The sequence spans 252 residues: tRNA pseudouridine synthase A (252 aa).

Asp-52 functions as the Nucleophile in the catalytic mechanism. Position 110 (Tyr-110) interacts with substrate.

It belongs to the tRNA pseudouridine synthase TruA family. Homodimer.

The catalysed reaction is uridine(38/39/40) in tRNA = pseudouridine(38/39/40) in tRNA. Functionally, formation of pseudouridine at positions 38, 39 and 40 in the anticodon stem and loop of transfer RNAs. This chain is tRNA pseudouridine synthase A, found in Blochmanniella floridana.